The sequence spans 539 residues: Phosphoenolpyruvate carboxykinase (ATP) (539 aa).

3 residues coordinate substrate: Arg64, Tyr206, and Lys212. ATP-binding positions include Lys212, His231, and 247-255 (GLSGTGKTT). Mn(2+)-binding residues include Lys212 and His231. Mn(2+) is bound at residue Asp268. ATP contacts are provided by residues Glu296, Arg332, 448–449 (RI), and Thr454. Residue Arg332 participates in substrate binding.

The protein belongs to the phosphoenolpyruvate carboxykinase (ATP) family. As to quaternary structure, monomer. The cofactor is Mn(2+).

It is found in the cytoplasm. The catalysed reaction is oxaloacetate + ATP = phosphoenolpyruvate + ADP + CO2. The protein operates within carbohydrate biosynthesis; gluconeogenesis. In terms of biological role, involved in the gluconeogenesis. Catalyzes the conversion of oxaloacetate (OAA) to phosphoenolpyruvate (PEP) through direct phosphoryl transfer between the nucleoside triphosphate and OAA. The sequence is that of Phosphoenolpyruvate carboxykinase (ATP) from Hamiltonella defensa subsp. Acyrthosiphon pisum (strain 5AT).